Consider the following 140-residue polypeptide: DegV domain-containing 15.5 kDa protein (140 aa).

The region spanning 4–140 (QIIVTDSTSD…ELVLLQSKKI (137 aa)) is the DegV domain. Hexadecanoate contacts are provided by Thr-61 and Ser-93.

In terms of biological role, may bind long-chain fatty acids, such as palmitate, and may play a role in lipid transport or fatty acid metabolism. The protein is DegV domain-containing 15.5 kDa protein of Staphylococcus aureus.